Here is a 403-residue protein sequence, read N- to C-terminus: MTESTFPQYPRLVLSKGREKSLLRRHPWVFSGAVSRLEGKANLGETIDIVDHQGKWLARGAWSPASQIRARVWTFDKAESIDIAFFTRRLRQAQQWRDWLAKKDGLDSYRLIAGESDGLPGVTIDRFGHFLVLQLLSAGAEYQRAALISALQTCYPDCAIYDRSDVAVRKKEGMALTQGPVTGELPPALLPIEEYGMKLLVDIQGGHKTGYYLDQRDSRLATRRYVENQRVLNCFSYTGGFAVSALMGGCRQVVSVDTSQDALDIARQNVELNQLDLSKAEFVRDDVFKLLRAYREHGEKFDVIIMDPPKFVENKSQLMGACRGYKDINMLAIQLLNPGGILLTFSCSGLMTSDLFQKIIADAAIDAGRDVQFIEQFRQAADHPVIATYPEGLYLKGFACRVM.

Residues 9–88 form the PUA domain; the sequence is YPRLVLSKGR…ESIDIAFFTR (80 aa).

Belongs to the methyltransferase superfamily. RlmI family.

The protein resides in the cytoplasm. It carries out the reaction cytidine(1962) in 23S rRNA + S-adenosyl-L-methionine = 5-methylcytidine(1962) in 23S rRNA + S-adenosyl-L-homocysteine + H(+). Its function is as follows. Specifically methylates the cytosine at position 1962 (m5C1962) of 23S rRNA. This is Ribosomal RNA large subunit methyltransferase I from Salmonella choleraesuis (strain SC-B67).